The sequence spans 119 residues: Ribonuclease P protein component (119 aa).

This sequence belongs to the RnpA family. Consists of a catalytic RNA component (M1 or rnpB) and a protein subunit.

The enzyme catalyses Endonucleolytic cleavage of RNA, removing 5'-extranucleotides from tRNA precursor.. RNaseP catalyzes the removal of the 5'-leader sequence from pre-tRNA to produce the mature 5'-terminus. It can also cleave other RNA substrates such as 4.5S RNA. The protein component plays an auxiliary but essential role in vivo by binding to the 5'-leader sequence and broadening the substrate specificity of the ribozyme. The chain is Ribonuclease P protein component from Bacillus pumilus (strain SAFR-032).